The following is a 413-amino-acid chain: Serine hydroxymethyltransferase (413 aa).

(6S)-5,6,7,8-tetrahydrofolate-binding positions include leucine 115 and 119-121; that span reads GHL. At lysine 224 the chain carries N6-(pyridoxal phosphate)lysine.

This sequence belongs to the SHMT family. As to quaternary structure, homodimer. Requires pyridoxal 5'-phosphate as cofactor.

The protein resides in the cytoplasm. The enzyme catalyses (6R)-5,10-methylene-5,6,7,8-tetrahydrofolate + glycine + H2O = (6S)-5,6,7,8-tetrahydrofolate + L-serine. Its pathway is one-carbon metabolism; tetrahydrofolate interconversion. It functions in the pathway amino-acid biosynthesis; glycine biosynthesis; glycine from L-serine: step 1/1. In terms of biological role, catalyzes the reversible interconversion of serine and glycine with tetrahydrofolate (THF) serving as the one-carbon carrier. This reaction serves as the major source of one-carbon groups required for the biosynthesis of purines, thymidylate, methionine, and other important biomolecules. Also exhibits THF-independent aldolase activity toward beta-hydroxyamino acids, producing glycine and aldehydes, via a retro-aldol mechanism. The protein is Serine hydroxymethyltransferase of Mycoplasma mycoides subsp. mycoides SC (strain CCUG 32753 / NCTC 10114 / PG1).